Here is a 218-residue protein sequence, read N- to C-terminus: Small ribosomal subunit protein uS3c (218 aa).

The KH type-2 domain maps to 47–118 (VQKHMRISSG…RLNIAIARVP (72 aa)).

Belongs to the universal ribosomal protein uS3 family. As to quaternary structure, part of the 30S ribosomal subunit.

Its subcellular location is the plastid. The protein localises to the chloroplast. The polypeptide is Small ribosomal subunit protein uS3c (rps3) (Nuphar advena (Common spatterdock)).